The primary structure comprises 202 residues: Keratin-associated protein 5-10 (202 aa).

7 repeat units span residues 48 to 51 (CCKP), 54 to 57 (CCVP), 144 to 147 (CCKP), 162 to 165 (CCNP), 172 to 175 (CCVP), 182 to 185 (CCKP), and 192 to 195 (CCVP). Residues 48–195 (CCKPVCCCVP…CCCQSSCCVP (148 aa)) are 7 X 4 AA repeats of C-C-X-P.

This sequence belongs to the KRTAP type 5 family. As to quaternary structure, interacts with hair keratins. In terms of tissue distribution, expressed in hair root but not in skin. Expressed also in brain and skeletal muscle.

Its function is as follows. In the hair cortex, hair keratin intermediate filaments are embedded in an interfilamentous matrix, consisting of hair keratin-associated protein (KRTAP), which are essential for the formation of a rigid and resistant hair shaft through their extensive disulfide bond cross-linking with abundant cysteine residues of hair keratins. The matrix proteins include the high-sulfur and high-glycine-tyrosine keratins. The sequence is that of Keratin-associated protein 5-10 (KRTAP5-10) from Homo sapiens (Human).